Reading from the N-terminus, the 434-residue chain is Putative nuclease OPG089 (434 aa).

Belongs to the XPG/RAD2 endonuclease family. FEN1 subfamily. Mg(2+) serves as cofactor.

The protein localises to the virion. In terms of biological role, putative nuclease that seems to be required for double-strand break repair, homologous recombination, and production of full-length viral genomic DNA. This is Putative nuclease OPG089 (OPG089) from Monkeypox virus.